We begin with the raw amino-acid sequence, 859 residues long: Envelope glycoprotein (859 aa).

Positions 1–6 are excised as a propeptide; sequence MVSIAF. The Extracellular portion of the chain corresponds to 7–614; that stretch reads YGGIPGGIST…KDLWSHIGNW (608 aa). N-linked (GlcNAc...) asparagine; by host glycans are attached at residues N40, N112, N141, N148, N186, N214, N233, N244, N340, N368, N399, N406, and N411. A fusion peptide region spans residues 446 to 466; that stretch reads FGISAIVAAIVAATAIAASAT. 2 N-linked (GlcNAc...) asparagine; by host glycosylation sites follow: N483 and N490. An immunosuppression region spans residues 498 to 513; that stretch reads LIERQIKILYAMILQT. N550 and N557 each carry an N-linked (GlcNAc...) asparagine; by host glycan. Coiled coils occupy residues 576–624 and 663–699; these read ILTT…SIIK and KKFH…YYKQ. A helical transmembrane segment spans residues 615-635; it reads IPGLGASIIKYIVMFLLIYLL. Over 636 to 859 the chain is Cytoplasmic; that stretch reads LTSSPKILRA…TSHVSMPQYV (224 aa).

As to quaternary structure, the mature envelope protein (Env) consists of a trimer of SU-TM heterodimers attached by noncovalent interactions or by a labile interchain disulfide bond. Post-translationally, specific enzymatic cleavages in vivo yield mature proteins. Envelope glycoproteins are synthesized as an inactive precursor that is N-glycosylated and processed likely by host cell furin or by a furin-like protease in the Golgi to yield the mature SU and TM proteins. The cleavage site between SU and TM requires the minimal sequence [KR]-X-[KR]-R.

Its subcellular location is the virion membrane. The protein localises to the host cell membrane. Functionally, the surface protein (SU) attaches the virus to the host cell by binding to its receptor. This interaction triggers the refolding of the transmembrane protein (TM) and is thought to activate its fusogenic potential by unmasking its fusion peptide. Fusion occurs at the host cell plasma membrane. The transmembrane protein (TM) acts as a class I viral fusion protein. Under the current model, the protein has at least 3 conformational states: pre-fusion native state, pre-hairpin intermediate state, and post-fusion hairpin state. During viral and target cell membrane fusion, the coiled coil regions (heptad repeats) assume a trimer-of-hairpins structure, positioning the fusion peptide in close proximity to the C-terminal region of the ectodomain. The formation of this structure appears to drive apposition and subsequent fusion of viral and target cell membranes. Membranes fusion leads to delivery of the nucleocapsid into the cytoplasm. In Equine infectious anemia virus (isolate 1369) (EIAV), this protein is Envelope glycoprotein (env).